The following is a 179-amino-acid chain: Large ribosomal subunit protein uL5 (179 aa).

It belongs to the universal ribosomal protein uL5 family. Part of the 50S ribosomal subunit; part of the 5S rRNA/L5/L18/L25 subcomplex. Contacts the 5S rRNA and the P site tRNA. Forms a bridge to the 30S subunit in the 70S ribosome.

In terms of biological role, this is one of the proteins that bind and probably mediate the attachment of the 5S RNA into the large ribosomal subunit, where it forms part of the central protuberance. In the 70S ribosome it contacts protein S13 of the 30S subunit (bridge B1b), connecting the 2 subunits; this bridge is implicated in subunit movement. Contacts the P site tRNA; the 5S rRNA and some of its associated proteins might help stabilize positioning of ribosome-bound tRNAs. The polypeptide is Large ribosomal subunit protein uL5 (Pseudomonas putida (strain W619)).